The sequence spans 351 residues: UPF0764 protein C16orf89 homolog (351 aa).

The first 25 residues, 1–25 (MKSLKMLYPLFMLLVLSSKIDLSNQ), serve as a signal peptide directing secretion.

It belongs to the UPF0764 family. As to quaternary structure, homodimer.

It is found in the secreted. In Danio rerio (Zebrafish), this protein is UPF0764 protein C16orf89 homolog.